A 147-amino-acid polypeptide reads, in one-letter code: Male-specific protein scotti (147 aa).

The disordered stretch occupies residues 55–93; sequence PQEPPLGVFPAQGGPNGPPRRRKKRSFYTMTKPTPPCQS. A compositionally biased stretch (polar residues) spans 82–93; that stretch reads YTMTKPTPPCQS. Residue Asn-128 is glycosylated (N-linked (GlcNAc...) asparagine).

It belongs to the male-specific scotti family. As to expression, expressed in primary spermatocytes and round spermatids. Low expression is seen in very short elongating cysts, but were detected at high levels in a few longer spermatid cysts.

Functionally, post-meiotically transcribed gene that has a role in late spermiogenesis; required for actin cone progression during spermatid individualization. The chain is Male-specific protein scotti from Drosophila melanogaster (Fruit fly).